The primary structure comprises 1527 residues: Lysophospholipase nte1 (1527 aa).

At 1–69 (MADDGGPFPL…PPPAPSTMVG (69 aa)) the chain is on the cytoplasmic side. Residues 70–90 (WIGWVFSFVFQVIPSILYWAI) form a helical membrane-spanning segment. Topologically, residues 91-112 (TFCTITLPTWLFTLFSMSLTFT) are lumenal. A helical membrane pass occupies residues 113-133 (MNFTTLLLIALAIVSTVSWFI). Over 134–1527 (RYRFLNMYSR…RTLAPRRASI (1394 aa)) the chain is Cytoplasmic. Disordered stretches follow at residues 240–259 (ADHE…GQNV), 299–387 (LSSS…HPDI), 576–596 (EKEQ…PFHR), and 750–785 (AHGE…RRQS). Residues 355-373 (HLEESRGTPDHDHQPESRT) are compositionally biased toward basic and acidic residues. Residues 685 to 804 (GGTS…VGSV) and 846 to 966 (RLTS…IAQR) each bind a nucleoside 3',5'-cyclic phosphate. Positions 761–771 (RTTTASSRTSS) are enriched in low complexity. A PNPLA domain is found at 1224-1388 (LVLGGGGARG…IDNLTVPHMK (165 aa)). A GXGXXG motif is present at residues 1228–1233 (GGGARG). A GXSXG motif is present at residues 1255 to 1259 (GTSIG). The Nucleophile role is filled by serine 1257. Catalysis depends on aspartate 1375, which acts as the Proton acceptor. The DGA/G motif lies at 1375–1377 (DGG).

This sequence belongs to the NTE family.

The protein resides in the endoplasmic reticulum membrane. It carries out the reaction a 1-acyl-sn-glycero-3-phosphocholine + H2O = sn-glycerol 3-phosphocholine + a fatty acid + H(+). With respect to regulation, inhibited by organophosphorus esters. Its function is as follows. Intracellular phospholipase B that catalyzes the double deacylation of phosphatidylcholine (PC) to glycerophosphocholine (GroPCho). Plays an important role in membrane lipid homeostasis. Responsible for the rapid PC turnover in response to inositol, elevated temperatures, or when choline is present in the growth medium. This chain is Lysophospholipase nte1 (nte1), found in Aspergillus terreus (strain NIH 2624 / FGSC A1156).